We begin with the raw amino-acid sequence, 674 residues long: Pentatricopeptide repeat-containing protein At4g17616 (674 aa).

PPR repeat units follow at residues 409–443 (GSRL…GYPM), 444–478 (ELAT…GLIT), 519–553 (MLYE…KIPP), 554–584 (TVQS…IKRN), and 593–627 (TQDL…DMYN).

This sequence belongs to the PPR family. P subfamily.

This Arabidopsis thaliana (Mouse-ear cress) protein is Pentatricopeptide repeat-containing protein At4g17616.